We begin with the raw amino-acid sequence, 317 residues long: Apolipoprotein E (317 aa).

The signal sequence occupies residues 1 to 18 (MKVLWAALLVTFLAGCQA). 8 repeat units span residues 80–101 (TLMDETMKELKAYKSELEEQLS), 102–123 (PVAEETRARLSKELQAAQARLG), 124–145 (ADMEDVRSRLVQYRSEVQAMLG), 146–167 (QSTEELRARLASHLRKLRKRLL), 168–189 (RDADDLQKRLAVYQAGAREGAE), 190–211 (RGVSAIRERLGPLVEQGRVRAA), 212–233 (TVGSLASQPLQERAQALGERLR), and 234–255 (ARMEEMGSRTRDRLDEVKEQVA). Positions 80–255 (TLMDETMKEL…RLDEVKEQVA (176 aa)) are 8 X 22 AA approximate tandem repeats. The residue at position 143 (M143) is a Methionine sulfoxide. At S147 the chain carries Phosphoserine. The tract at residues 158 to 168 (HLRKLRKRLLR) is LDL and other lipoprotein receptors binding. 162–165 (LRKR) contacts heparin. The segment at 210–290 (AATVGSLASQ…SWFEPLVEDM (81 aa)) is lipid-binding and lipoprotein association. 229-236 (GERLRARM) contributes to the heparin binding site. Residues 266-317 (QQISLQAEAFQARLKSWFEPLVEDMQRQWAGLVEKVQAAVGASTAPVPIDNH) are homooligomerization. The specificity for association with VLDL stretch occupies residues 278 to 290 (RLKSWFEPLVEDM).

This sequence belongs to the apolipoprotein A1/A4/E family. In terms of assembly, homotetramer. May interact with ABCA1; functionally associated with ABCA1 in the biogenesis of HDLs. May interact with APP/A4 amyloid-beta peptide; the interaction is extremely stable in vitro but its physiological significance is unclear. May interact with MAPT. May interact with MAP2. In the cerebrospinal fluid, interacts with secreted SORL1. Interacts with PMEL; this allows the loading of PMEL luminal fragment on ILVs to induce fibril nucleation. APOE exists as multiple glycosylated and sialylated glycoforms within cells and in plasma. The extent of glycosylation and sialylation are tissue and context specific. Post-translationally, glycated in plasma VLDL. In terms of processing, phosphorylated by FAM20C in the extracellular medium.

Its subcellular location is the secreted. It is found in the extracellular space. It localises to the extracellular matrix. The protein resides in the extracellular vesicle. The protein localises to the endosome. Its subcellular location is the multivesicular body. Functionally, APOE is an apolipoprotein, a protein associating with lipid particles, that mainly functions in lipoprotein-mediated lipid transport between organs via the plasma and interstitial fluids. APOE is a core component of plasma lipoproteins and is involved in their production, conversion and clearance. Apolipoproteins are amphipathic molecules that interact both with lipids of the lipoprotein particle core and the aqueous environment of the plasma. As such, APOE associates with chylomicrons, chylomicron remnants, very low density lipoproteins (VLDL) and intermediate density lipoproteins (IDL) but shows a preferential binding to high-density lipoproteins (HDL). It also binds a wide range of cellular receptors including the LDL receptor/LDLR, the LDL receptor-related proteins LRP1, LRP2 and LRP8 and the very low-density lipoprotein receptor/VLDLR that mediate the cellular uptake of the APOE-containing lipoprotein particles. Finally, APOE also has a heparin-binding activity and binds heparan-sulfate proteoglycans on the surface of cells, a property that supports the capture and the receptor-mediated uptake of APOE-containing lipoproteins by cells. A main function of APOE is to mediate lipoprotein clearance through the uptake of chylomicrons, VLDLs, and HDLs by hepatocytes. APOE is also involved in the biosynthesis by the liver of VLDLs as well as their uptake by peripheral tissues ensuring the delivery of triglycerides and energy storage in muscle, heart and adipose tissues. By participating in the lipoprotein-mediated distribution of lipids among tissues, APOE plays a critical role in plasma and tissues lipid homeostasis. APOE is also involved in two steps of reverse cholesterol transport, the HDLs-mediated transport of cholesterol from peripheral tissues to the liver, and thereby plays an important role in cholesterol homeostasis. First, it is functionally associated with ABCA1 in the biogenesis of HDLs in tissues. Second, it is enriched in circulating HDLs and mediates their uptake by hepatocytes. APOE also plays an important role in lipid transport in the central nervous system, regulating neuron survival and sprouting. The protein is Apolipoprotein E (APOE) of Macaca fascicularis (Crab-eating macaque).